The following is a 466-amino-acid chain: Probable WRKY transcription factor 32 (466 aa).

Disordered stretches follow at residues 1 to 45 (MEED…MEDL) and 140 to 166 (SVPT…PRTP). The span at 8 to 38 (DEAKTYTVEKSEKVEPEKDGLSQFRDEEKSL) shows a compositional bias: basic and acidic residues. Residues 162-226 (VPRTPARDGY…NKGLHTHEPP (65 aa)) constitute a DNA-binding region (WRKY 1). Residues Cys193, Cys198, His221, and His223 each coordinate Zn(2+). Residues 284–317 (HCENEAVEEPEPKRRLKKDNSQSSDSVSKPGKKN) form a disordered region. The segment at residues 325-390 (GDVGICGDGY…YKGVHNHDMP (66 aa)) is a DNA-binding region (WRKY 2). Residues Cys356, Cys361, His385, and His387 each coordinate Zn(2+). The disordered stretch occupies residues 410-439 (TSMRTRTDDQVNIPTSSQCSVGRESEKQSK). The segment covering 419–429 (QVNIPTSSQCS) has biased composition (polar residues).

It belongs to the WRKY group I family.

Its subcellular location is the nucleus. Transcription factor. Interacts specifically with the W box (5'-(T)TGAC[CT]-3'), a frequently occurring elicitor-responsive cis-acting element. The protein is Probable WRKY transcription factor 32 (WRKY32) of Arabidopsis thaliana (Mouse-ear cress).